We begin with the raw amino-acid sequence, 334 residues long: Cytoskeleton protein RodZ (334 aa).

Residues 1 to 111 (MNTEATHDQN…LGKRRKKRDG (111 aa)) lie on the Cytoplasmic side of the membrane. The region spanning 19 to 71 (LRNAREQLGLSQQAVAERLCLKVSTVRDIEEDKAPSDLASTFLRGYIRSYARL) is the HTH cro/C1-type domain. A DNA-binding region (H-T-H motif) is located at residues 30–49 (QQAVAERLCLKVSTVRDIEE). The chain crosses the membrane as a helical; Signal-anchor for type II membrane protein span at residues 112–132 (WLMSFTWLVLFVVVGLTGAWW). Over 133–334 (WQNHKAHQEE…TLNAEPTPAQ (202 aa)) the chain is Periplasmic. The segment at 152–210 (AGLNADKDSGQSVPLDTGAVTSQDTTPAQTAPAPATPVDSTAATQTPAPTAAATQNTVV) is disordered. Residues 161–175 (GQSVPLDTGAVTSQD) are compositionally biased toward polar residues. Residues 176-210 (TTPAQTAPAPATPVDSTAATQTPAPTAAATQNTVV) are compositionally biased toward low complexity.

This sequence belongs to the RodZ family.

The protein resides in the cell inner membrane. Cytoskeletal protein that is involved in cell-shape control through regulation of the length of the long axis. The polypeptide is Cytoskeleton protein RodZ (Salmonella gallinarum (strain 287/91 / NCTC 13346)).